The primary structure comprises 143 residues: Brain ribonuclease (143 aa).

Residues 1–21 form a disordered region; it reads KESAAAKFRRQHMDSGSSSSG. Substrate contacts are provided by Lys-7 and Arg-10. His-12 acts as the Proton acceptor in catalysis. 4 disulfide bridges follow: Cys-26-Cys-84, Cys-40-Cys-95, Cys-58-Cys-110, and Cys-65-Cys-72. 41 to 45 provides a ligand contact to substrate; that stretch reads KPVNT. Asn-62 carries N-linked (GlcNAc...) asparagine glycosylation. Lys-66 and Arg-85 together coordinate substrate. His-119 functions as the Proton donor in the catalytic mechanism. A glycan (O-linked (GalNAc...) threonine) is linked at Thr-129. Ser-133 is a glycosylation site (O-linked (GalNAc...) serine).

Belongs to the pancreatic ribonuclease family.

The protein localises to the secreted. The protein is Brain ribonuclease (BRN) of Ovis aries (Sheep).